The following is a 202-amino-acid chain: Riboflavin synthase (202 aa).

Lumazine-binding repeat units lie at residues 1–101 (MFTG…MGGH) and 102–198 (LVFG…ARLA). Residues 4–6 (GII), 47–49 (CLT), 66–68 (EAW), 105–107 (GHV), Lys140, 149–151 (SLT), and 163–168 (LLIRHS) each bind 2,4-dihydroxypteridine.

As to quaternary structure, homotrimer.

It catalyses the reaction 2 6,7-dimethyl-8-(1-D-ribityl)lumazine + H(+) = 5-amino-6-(D-ribitylamino)uracil + riboflavin. It participates in cofactor biosynthesis; riboflavin biosynthesis; riboflavin from 2-hydroxy-3-oxobutyl phosphate and 5-amino-6-(D-ribitylamino)uracil: step 2/2. Its activity is regulated as follows. Is inhibited by riboflavin. Product inhibition may be the major mechanism by which RS regulates its enzymatic activity in vivo. Functionally, catalyzes the dismutation of two molecules of 6,7-dimethyl-8-ribityllumazine, resulting in the formation of riboflavin and 5-amino-6-(D-ribitylamino)uracil. This is Riboflavin synthase from Brucella abortus (strain 2308).